The sequence spans 454 residues: Bifunctional protein GlmU (454 aa).

The tract at residues 1–232 (MTDRTCLSIV…VDNVIGINNR (232 aa)) is pyrophosphorylase. Residues 11–14 (LAAG), Lys-25, Gln-78, and 83–84 (GT) contribute to the UDP-N-acetyl-alpha-D-glucosamine site. Asp-108 is a binding site for Mg(2+). 4 residues coordinate UDP-N-acetyl-alpha-D-glucosamine: Gly-144, Glu-158, Asn-173, and Asn-230. Asn-230 contacts Mg(2+). Positions 233 to 253 (AELAEAETIWQNRKRRELMLS) are linker. An N-acetyltransferase region spans residues 254–454 (GVTLIAPETV…AIKAAKSVSK (201 aa)). UDP-N-acetyl-alpha-D-glucosamine contacts are provided by Arg-319 and Lys-337. His-349 acts as the Proton acceptor in catalysis. Positions 352 and 363 each coordinate UDP-N-acetyl-alpha-D-glucosamine. Acetyl-CoA is bound by residues Ala-366, 372–373 (NY), Ser-391, Ser-409, and Arg-426.

The protein in the N-terminal section; belongs to the N-acetylglucosamine-1-phosphate uridyltransferase family. In the C-terminal section; belongs to the transferase hexapeptide repeat family. Homotrimer. Mg(2+) serves as cofactor.

The protein localises to the cytoplasm. It carries out the reaction alpha-D-glucosamine 1-phosphate + acetyl-CoA = N-acetyl-alpha-D-glucosamine 1-phosphate + CoA + H(+). It catalyses the reaction N-acetyl-alpha-D-glucosamine 1-phosphate + UTP + H(+) = UDP-N-acetyl-alpha-D-glucosamine + diphosphate. It functions in the pathway nucleotide-sugar biosynthesis; UDP-N-acetyl-alpha-D-glucosamine biosynthesis; N-acetyl-alpha-D-glucosamine 1-phosphate from alpha-D-glucosamine 6-phosphate (route II): step 2/2. Its pathway is nucleotide-sugar biosynthesis; UDP-N-acetyl-alpha-D-glucosamine biosynthesis; UDP-N-acetyl-alpha-D-glucosamine from N-acetyl-alpha-D-glucosamine 1-phosphate: step 1/1. It participates in bacterial outer membrane biogenesis; LPS lipid A biosynthesis. In terms of biological role, catalyzes the last two sequential reactions in the de novo biosynthetic pathway for UDP-N-acetylglucosamine (UDP-GlcNAc). The C-terminal domain catalyzes the transfer of acetyl group from acetyl coenzyme A to glucosamine-1-phosphate (GlcN-1-P) to produce N-acetylglucosamine-1-phosphate (GlcNAc-1-P), which is converted into UDP-GlcNAc by the transfer of uridine 5-monophosphate (from uridine 5-triphosphate), a reaction catalyzed by the N-terminal domain. In Brucella melitensis biotype 1 (strain ATCC 23456 / CCUG 17765 / NCTC 10094 / 16M), this protein is Bifunctional protein GlmU.